The sequence spans 397 residues: CCA-adding enzyme (397 aa).

ATP-binding residues include Gly-26 and Arg-29. Positions 26 and 29 each coordinate CTP. Residues Asp-39 and Asp-41 each contribute to the Mg(2+) site. Positions 110, 153, 156, 159, and 162 each coordinate ATP. Residues Arg-110, Asp-153, Arg-156, Arg-159, and Arg-162 each contribute to the CTP site.

It belongs to the tRNA nucleotidyltransferase/poly(A) polymerase family. Bacterial CCA-adding enzyme type 3 subfamily. As to quaternary structure, homodimer. Requires Mg(2+) as cofactor.

The enzyme catalyses a tRNA precursor + 2 CTP + ATP = a tRNA with a 3' CCA end + 3 diphosphate. It catalyses the reaction a tRNA with a 3' CCA end + 2 CTP + ATP = a tRNA with a 3' CCACCA end + 3 diphosphate. Catalyzes the addition and repair of the essential 3'-terminal CCA sequence in tRNAs without using a nucleic acid template. Adds these three nucleotides in the order of C, C, and A to the tRNA nucleotide-73, using CTP and ATP as substrates and producing inorganic pyrophosphate. tRNA 3'-terminal CCA addition is required both for tRNA processing and repair. Also involved in tRNA surveillance by mediating tandem CCA addition to generate a CCACCA at the 3' terminus of unstable tRNAs. While stable tRNAs receive only 3'-terminal CCA, unstable tRNAs are marked with CCACCA and rapidly degraded. The chain is CCA-adding enzyme from Bacillus cereus (strain AH187).